Reading from the N-terminus, the 374-residue chain is Tomoregulin-2 (374 aa).

Residues 1 to 40 (MVLWESPRQCSSWTLCEGFCWLLLLPVTLLIIARPVKLAA) form the signal peptide. Residues 41-320 (FPTSLSDCQT…VPGPVRFQYV (280 aa)) lie on the Extracellular side of the membrane. Asn-55 is a glycosylation site (N-linked (GlcNAc...) asparagine). Kazal-like domains are found at residues 90–137 (VCQF…SCAT) and 181–229 (VCNI…RCQD). 6 disulfide bridges follow: Cys-91-Cys-121, Cys-95-Cys-114, Cys-103-Cys-135, Cys-182-Cys-213, Cys-186-Cys-206, and Cys-195-Cys-227. Asn-230 carries N-linked (GlcNAc...) asparagine glycosylation. In terms of domain architecture, EGF-like spans 261–301 (HHIPCPEHYNGFCMHGKCEHSINMQEPSCRCDAGYTGQHCE). 3 disulfides stabilise this stretch: Cys-265/Cys-278, Cys-273/Cys-289, and Cys-291/Cys-300. The interval 303–320 (KDYSVLYVVPGPVRFQYV) is required for shedding. Residues 321–341 (LIAAVIGTIQIAVICVVVLCI) form a helical membrane-spanning segment. Topologically, residues 342 to 374 (TRKCPRSNRIHRQKQNTGHYSSDNTTRASTRLI) are cytoplasmic. The disordered stretch occupies residues 353 to 374 (RQKQNTGHYSSDNTTRASTRLI). Residues 356 to 374 (QNTGHYSSDNTTRASTRLI) are compositionally biased toward polar residues.

The protein belongs to the tomoregulin family. O-glycosylated; contains chondroitin sulfate glycosaminoglycans. Post-translationally, a soluble form (TMEFF2-ECD) is produced by proteolytic shedding. This shedding can be induced by phorbol ester or pro-inflammatory cytokines such as TNFalpha, and is mediated by a metalloproteinase ADAM. As to expression, widely expressed in the brain. In the olfactory bulb expressed in mitral cell, granule, and glomerular layers. In the hippocampus expressed in hippocampal cornu ammonis, pyramidal layer, dentate gyrus, and substantia nigra pars compacta.

It localises to the membrane. Functionally, may be a survival factor for hippocampal and mesencephalic neurons. The shedded form may up-regulate cell proliferation. The sequence is that of Tomoregulin-2 (Tmeff2) from Mus musculus (Mouse).